A 141-amino-acid chain; its full sequence is Ly6/PLAUR domain-containing protein 1 (141 aa).

The N-terminal stretch at 1-20 (MWVLGIAATFCGLFWLPGLA) is a signal peptide. Disulfide bonds link Cys25–Cys54, Cys28–Cys37, Cys46–Cys71, Cys77–Cys100, Cys88–Cys97, and Cys101–Cys106. A UPAR/Ly6 domain is found at 25–107 (CYQCEEFQLN…ISCCNTPLCN (83 aa)). A glycan (N-linked (GlcNAc...) asparagine) is linked at Asn45. The GPI-anchor amidated glycine moiety is linked to residue Gly115. The propeptide at 116–141 (SSASAIRPGLLTTLLFFHLALCLAHC) is removed in mature form.

Interacts with CHRNA4 and nAChRs containing alpha-4:beta-2 (CHRNA4:CHRNB2) and alpha-7 (CHRNA7) subunits. As to expression, preferentially expressed in the nervous system. Expressed in embryonic and postnatal postmitotic central and peripheral neurons including subpopulations of motor neurons, sensory neurons, interneurons and neurons of the autonomous nervous system. Expressed around the growing nerves in the limb bud. Expressed at high levels in specific brain regions such as the prefrontal cortex, amygdala, hippocampus, mediodorsal thalamus, dentate gyrus and specific brainstem nuclei (at protein level).

Its subcellular location is the cell membrane. Believed to act as a modulator of nicotinic acetylcholine receptors (nAChRs) activity. In vitro increases receptor desensitization and decreases affinity for ACh of alpha-4:beta-2-containing nAChRs. May play a role in the intracellular trafficking of alpha-4:beta-2 and alpha-7-containing nAChRs and may inhibit their expression at the cell surface. May be involved in the control of anxiety. In Mus musculus (Mouse), this protein is Ly6/PLAUR domain-containing protein 1 (Lypd1).